A 459-amino-acid polypeptide reads, in one-letter code: UDP-N-acetylmuramate--L-alanine ligase (459 aa).

113-119 (GSHGKTS) lines the ATP pocket.

Belongs to the MurCDEF family.

It is found in the cytoplasm. It carries out the reaction UDP-N-acetyl-alpha-D-muramate + L-alanine + ATP = UDP-N-acetyl-alpha-D-muramoyl-L-alanine + ADP + phosphate + H(+). The protein operates within cell wall biogenesis; peptidoglycan biosynthesis. In terms of biological role, cell wall formation. In Desulfotalea psychrophila (strain LSv54 / DSM 12343), this protein is UDP-N-acetylmuramate--L-alanine ligase.